Consider the following 374-residue polypeptide: tRNA-specific 2-thiouridylase MnmA (374 aa).

ATP-binding positions include 17–24 (GMSGGVDS) and M43. The interaction with target base in tRNA stretch occupies residues 103–105 (NPD). The active-site Nucleophile is C108. C108 and C204 are oxidised to a cystine. G132 provides a ligand contact to ATP. The segment at 154–156 (KDQ) is interaction with tRNA. Catalysis depends on C204, which acts as the Cysteine persulfide intermediate. The segment at 316-317 (RY) is interaction with tRNA.

It belongs to the MnmA/TRMU family.

It localises to the cytoplasm. The enzyme catalyses S-sulfanyl-L-cysteinyl-[protein] + uridine(34) in tRNA + AH2 + ATP = 2-thiouridine(34) in tRNA + L-cysteinyl-[protein] + A + AMP + diphosphate + H(+). Functionally, catalyzes the 2-thiolation of uridine at the wobble position (U34) of tRNA, leading to the formation of s(2)U34. This Pseudomonas fluorescens (strain SBW25) protein is tRNA-specific 2-thiouridylase MnmA.